A 385-amino-acid polypeptide reads, in one-letter code: MAAVESRVCETEGCSSEAKLQCPTCIKLGIQGSYFCSQECFKGSWASHKLLHKKAKDDKIKPETSPWTMDGDINTDPWPGYRYTGKLRPHYPLTPMRPVPSYIQRPDYADHPLGMSESEQALKGTSQIKILSTEDIEGMRVVCRLAREVLGVAAMMVKSGITTEEIDHAVHLACISRNCYPSPLNYYNFPKSCCTSVNEVICHGIPDRRPLQDGDIVNVDITVYRDGYHGDLNETFYVGDVDEGAKRLVETTYECLMQAIDEVKPGVRYRELGNIIQKHAQANGFSVVRSYCGHGIHKLFHTAPNVPHYAKNKAVGVMKPGHVFTIEPMICEGGWQDETWPDGWTAITRDGKRSAQFEHTLLVTETGCEILTRRLEENGRPHFIS.

The C6H2-type zinc-finger motif lies at 6–59; that stretch reads SRVCETEGCSSEAKLQCPTCIKLGIQGSYFCSQECFKGSWASHKLLHKKAKDDK. Cys9, Cys14, Cys22, Cys25, Cys36, Cys40, His48, and His52 together coordinate Zn(2+). His203 contributes to the a protein binding site. Residues Asp220, Asp231, and His294 each coordinate Zn(2+). His301 is a binding site for a protein. Zn(2+) contacts are provided by Glu327 and Glu358.

The protein belongs to the peptidase M24A family. Methionine aminopeptidase type 1 subfamily. As to quaternary structure, associates with the 60S ribosomal subunit of the 80S translational complex. The cofactor is Zn(2+). Co(2+) is required as a cofactor. Mn(2+) serves as cofactor. Requires Fe(2+) as cofactor.

The protein resides in the cytoplasm. It carries out the reaction Release of N-terminal amino acids, preferentially methionine, from peptides and arylamides.. Cotranslationally removes the N-terminal methionine from nascent proteins. The N-terminal methionine is often cleaved when the second residue in the primary sequence is small and uncharged (Met-Ala-, Cys, Gly, Pro, Ser, Thr, or Val). This chain is Methionine aminopeptidase 1 (metap1), found in Xenopus tropicalis (Western clawed frog).